A 316-amino-acid polypeptide reads, in one-letter code: UDP-N-acetylglucosamine transporter yea4 (316 aa).

At 1–3 the chain is on the cytoplasmic side; that stretch reads MIA. A helical transmembrane segment spans residues 4–24; that stretch reads SALSFIFGGCCSNAYALEALV. The Lumenal portion of the chain corresponds to 25–31; sequence REFPSSG. The helical transmembrane segment at 32 to 52 threads the bilayer; sequence ILITFSQFILITIEGLIYFLL. At 53-67 the chain is on the cytoplasmic side; sequence NDVQSLKHPKVPRKR. A helical transmembrane segment spans residues 68–88; the sequence is WFVVVVMFFAINVLNNVALGF. Over 89–120 the chain is Lumenal; the sequence is DISVPVHIILRSSGPLTTMAVGRILAGKRYSS. The helical transmembrane segment at 121-141 threads the bilayer; sequence LQIGSVFILTIGVIIATLGNA. The Cytoplasmic segment spans residues 142-153; that stretch reads KDLHLHVESMTR. A helical transmembrane segment spans residues 154–174; the sequence is FGIGFTILVITQILGAIMGLV. Residues 175–187 lie on the Lumenal side of the membrane; the sequence is LENTYRIYGSDWR. A helical transmembrane segment spans residues 188-208; it reads ESLFYTHALSLPFFLFLLRPI. Topologically, residues 209 to 214 are cytoplasmic; it reads RSQWND. The chain crosses the membrane as a helical span at residues 215–235; it reads LFAIHTKGFLNLPSGVWYLCF. Residues 236 to 274 are Lumenal-facing; it reads NTLAQYFCVRGVNALGAETSALTVSVVLNVRKFVSLCLS. A helical membrane pass occupies residues 275 to 295; that stretch reads LILFENEMGPAVKFGALLVFG. The Cytoplasmic segment spans residues 296–316; the sequence is SSAVYASARSKPKTNGLKKND.

The protein belongs to the nucleotide-sugar transporter family. SLC35B subfamily.

It is found in the endoplasmic reticulum. Its subcellular location is the endoplasmic reticulum membrane. Functionally, sugar transporter that specifically mediates the transport of UDP-N-acetylglucosamine (UDP-GlcNAc) and is required for cell wall chitin synthesis. This is UDP-N-acetylglucosamine transporter yea4 (yea4) from Schizosaccharomyces pombe (strain 972 / ATCC 24843) (Fission yeast).